A 736-amino-acid polypeptide reads, in one-letter code: Catalase-peroxidase (736 aa).

Positions 1-25 (MSENGKCPVTGKTSKPVAGGGTSNQ) are disordered. A cross-link (tryptophyl-tyrosyl-methioninium (Trp-Tyr) (with M-250)) is located at residues 96–224 (WHSAGTYRMG…LAAVQMGLIY (129 aa)). His-97 serves as the catalytic Proton acceptor. Positions 224–250 (YVNPEGPDGNPDPIASGKDVRETFARM) form a cross-link, tryptophyl-tyrosyl-methioninium (Tyr-Met) (with W-96). Residue His-265 coordinates heme b. The segment at 294–313 (GWKSSHGRGKGGDTISSGIE) is disordered.

The protein belongs to the peroxidase family. Peroxidase/catalase subfamily. Homodimer or homotetramer. It depends on heme b as a cofactor. Post-translationally, formation of the three residue Trp-Tyr-Met cross-link is important for the catalase, but not the peroxidase activity of the enzyme.

It carries out the reaction H2O2 + AH2 = A + 2 H2O. The enzyme catalyses 2 H2O2 = O2 + 2 H2O. Its function is as follows. Bifunctional enzyme with both catalase and broad-spectrum peroxidase activity. This is Catalase-peroxidase from Desulfatibacillum aliphaticivorans.